The primary structure comprises 326 residues: Putative ribose-phosphate pyrophosphokinase 2 (326 aa).

ATP contacts are provided by residues 43-45 (DGE) and 102-103 (RQ). A Mg(2+)-binding site is contributed by His136. Residues Asp225 and 229–233 (NTGKT) each bind D-ribose 5-phosphate.

It belongs to the ribose-phosphate pyrophosphokinase family. Class I subfamily. In terms of assembly, homohexamer. It depends on Mg(2+) as a cofactor.

It is found in the cytoplasm. The catalysed reaction is D-ribose 5-phosphate + ATP = 5-phospho-alpha-D-ribose 1-diphosphate + AMP + H(+). It functions in the pathway metabolic intermediate biosynthesis; 5-phospho-alpha-D-ribose 1-diphosphate biosynthesis; 5-phospho-alpha-D-ribose 1-diphosphate from D-ribose 5-phosphate (route I): step 1/1. Its function is as follows. Involved in the biosynthesis of the central metabolite phospho-alpha-D-ribosyl-1-pyrophosphate (PRPP) via the transfer of pyrophosphoryl group from ATP to 1-hydroxyl of ribose-5-phosphate (Rib-5-P). This chain is Putative ribose-phosphate pyrophosphokinase 2, found in Streptococcus pyogenes serotype M18 (strain MGAS8232).